A 522-amino-acid polypeptide reads, in one-letter code: Semenogelin-2 (522 aa).

The signal sequence occupies residues 1–23 (MKSIILFVLSLLLILEKQAAVMG). 4 disordered regions span residues 26 to 62 (CGSK…SKGS), 132 to 158 (GGQA…ISSQ), 272 to 358 (NLNQ…ERHL), and 379 to 522 (EEQI…PVST). 2 stretches are compositionally biased toward polar residues: residues 31–40 (QLPSGSSQFP) and 137–158 (RGTQ…ISSQ). The span at 292 to 310 (RTEERQLNRGEKSVQKDVS) shows a compositional bias: basic and acidic residues. Positions 325-335 (KSQNQVTIHSQ) are enriched in polar residues. A compositionally biased stretch (basic and acidic residues) spans 336–345 (GQEHGHKENK). Composition is skewed to polar residues over residues 379–397 (EEQI…SQAQ), 427–436 (KDVSQSSTSF), and 446–464 (SQIQ…QNAK). Composition is skewed to basic and acidic residues over residues 465–492 (GKSD…ESSE) and 499–522 (TEHE…PVST).

It belongs to the semenogelin family. As to quaternary structure, interacts with SERPINA5.

It is found in the secreted. Participates in the formation of a gel matrix (sperm coagulum) entrapping the accessory gland secretions and ejaculated spermatozoa. This Hylobates klossii (Kloss's gibbon) protein is Semenogelin-2 (SEMG2).